Consider the following 1433-residue polypeptide: Probable ATP-dependent RNA helicase spindle-E (1433 aa).

The 169-residue stretch at 126 to 294 (INAINENPVV…FANERSAPPV (169 aa)) folds into the Helicase ATP-binding domain. Position 139-146 (139-146 (GETGCGKT)) interacts with ATP. Positions 240-243 (DEVH) match the DEAH box motif. The Helicase C-terminal domain occupies 355–526 (TGKSYNQSLR…NCVLKAKELK (172 aa)). The 64-residue stretch at 935–998 (AGAITKGLML…RLMSQDLLRH (64 aa)) folds into the Tudor domain.

This sequence belongs to the DEAD box helicase family. DEAH subfamily.

Its subcellular location is the cytoplasm. It carries out the reaction ATP + H2O = ADP + phosphate + H(+). Functionally, probable ATP-binding RNA helicase which plays a central role during spermatogenesis and oogenesis by repressing transposable elements and preventing their mobilization, which is essential for the germline integrity. Acts via the piRNA metabolic process, which mediates the repression of transposable elements during meiosis by forming complexes composed of piRNAs and Piwi and govern the methylation and subsequent repression of transposons. Involved in the repression of LTR retrotransposon copia. Also involved in telomere regulation by repressing specialized telomeric retroelements HeT-A, TAHRE, and TART; Drosophila telomeres being maintained by transposition of specialized telomeric retroelements. Involved in telomeric trans-silencing, a repression mechanism by which a transposon or a transgene inserted in subtelomeric heterochromatin has the capacity to repress in trans in the female germline, a homologous transposon, or transgene located in euchromatin. Involved in the repression of testis-expressed Stellate genes by the homologous Su(Ste) repeats. Required for anteroposterior and dorsoventral axis formation during oogenesis. This chain is Probable ATP-dependent RNA helicase spindle-E (spn-E), found in Drosophila pseudoobscura pseudoobscura (Fruit fly).